Here is a 53-residue protein sequence, read N- to C-terminus: uncharacterized protein (53 aa).

The next 2 helical transmembrane spans lie at 3 to 22 (LFGM…GVLL) and 26 to 45 (AFFF…FTVL).

The protein localises to the cell membrane. This is an uncharacterized protein from Bacillus subtilis (strain 168).